The primary structure comprises 46 residues: PhoP/PhoQ regulator MgrB (46 aa).

Residues 6-26 (WVALVVVVLACLLLWAQVFNM) traverse the membrane as a helical segment.

This sequence belongs to the MgrB family. May form homooligomers. Probably interacts with the periplasmic domain of PhoQ.

The protein localises to the cell inner membrane. In terms of biological role, phoP-regulated transcription is redox-sensitive, being activated when the periplasm becomes more reducing. MgrB acts between DsbA/DsbB and PhoP/PhoQ in this pathway. Represses PhoP/PhoQ signaling, possibly by binding to the periplasmic domain of PhoQ, altering its activity and that of downstream effector PhoP. The polypeptide is PhoP/PhoQ regulator MgrB (Escherichia coli O6:K15:H31 (strain 536 / UPEC)).